Consider the following 185-residue polypeptide: Elongation factor P (185 aa).

Belongs to the elongation factor P family.

The protein resides in the cytoplasm. It functions in the pathway protein biosynthesis; polypeptide chain elongation. Functionally, involved in peptide bond synthesis. Stimulates efficient translation and peptide-bond synthesis on native or reconstituted 70S ribosomes in vitro. Probably functions indirectly by altering the affinity of the ribosome for aminoacyl-tRNA, thus increasing their reactivity as acceptors for peptidyl transferase. The chain is Elongation factor P from Streptococcus pyogenes serotype M49 (strain NZ131).